We begin with the raw amino-acid sequence, 220 residues long: Iron-sulfur cluster repair protein YtfE (220 aa).

It belongs to the RIC family. YtfE subfamily. As to quaternary structure, homodimer.

The protein resides in the cytoplasm. Its function is as follows. Di-iron-containing protein involved in the repair of iron-sulfur clusters damaged by oxidative and nitrosative stress conditions. In Salmonella paratyphi A (strain AKU_12601), this protein is Iron-sulfur cluster repair protein YtfE.